A 427-amino-acid polypeptide reads, in one-letter code: Serine protease inhibitor 88Ea (427 aa).

The first 18 residues, 1–18 (MHILSISLMAVLPAIALA), serve as a signal peptide directing secretion. Asparagine 224 carries an N-linked (GlcNAc...) asparagine glycan.

Belongs to the serpin family. Expressed in nurse cells and oocytes. Expressed in wings.

Its subcellular location is the secreted. Functionally, serine protease inhibitor with activity toward trypsin. Negatively regulates the Toll signaling pathway and suppresses the expression of the antifungal peptide drosomycin. Its negative regulation of the Toll signaling pathway also results in the inhibition of the melanization immune response via the phenoloxidase (PPO1) cascade. Essential for unfolding and expansion of the wings after emergence from the pupal case. May regulate the Toll pathway by blocking the proteolysis of the Toll ligand spz. The sequence is that of Serine protease inhibitor 88Ea from Drosophila melanogaster (Fruit fly).